The primary structure comprises 561 residues: DNA ligase (561 aa).

Glu253 provides a ligand contact to ATP. Lys255 functions as the N6-AMP-lysine intermediate in the catalytic mechanism. ATP is bound by residues Arg260, Arg275, Glu304, Phe344, Arg421, and Lys427.

The protein belongs to the ATP-dependent DNA ligase family. Mg(2+) is required as a cofactor.

It carries out the reaction ATP + (deoxyribonucleotide)n-3'-hydroxyl + 5'-phospho-(deoxyribonucleotide)m = (deoxyribonucleotide)n+m + AMP + diphosphate.. Functionally, DNA ligase that seals nicks in double-stranded DNA during DNA replication, DNA recombination and DNA repair. In Halobacterium salinarum (strain ATCC 29341 / DSM 671 / R1), this protein is DNA ligase.